The sequence spans 828 residues: Outer membrane usher protein PmfC (828 aa).

Positions 1-28 are cleaved as a signal peptide; it reads MLIPYSPHTIWKTICATLLLSLAFFSQA.

This sequence belongs to the fimbrial export usher family.

The protein resides in the cell outer membrane. Functionally, involved in the export and assembly of PMF fimbrial subunits across the outer membrane. The protein is Outer membrane usher protein PmfC (pmfC) of Proteus mirabilis (strain HI4320).